Consider the following 600-residue polypeptide: Proline dehydrogenase 1, mitochondrial (600 aa).

The disordered stretch occupies residues 155–177 (AEHKEMESCTSAAERDGSGTNKR). N6-acetyllysine is present on residues Lys368 and Lys486.

Belongs to the proline oxidase family. FAD is required as a cofactor. As to expression, expressed in lung, skeletal muscle and brain, to a lesser extent in heart and kidney, and weakly in liver, placenta and pancreas.

The protein resides in the mitochondrion matrix. It carries out the reaction L-proline + a quinone = (S)-1-pyrroline-5-carboxylate + a quinol + H(+). It participates in amino-acid degradation; L-proline degradation into L-glutamate; L-glutamate from L-proline: step 1/2. Converts proline to delta-1-pyrroline-5-carboxylate. The sequence is that of Proline dehydrogenase 1, mitochondrial from Homo sapiens (Human).